The chain runs to 584 residues: Pentatricopeptide repeat-containing protein At2g01510, mitochondrial (584 aa).

Residues 1–20 (MLAKQTPLTKQMLSELLRAS) constitute a mitochondrion transit peptide. 9 PPR repeats span residues 73-107 (RIFL…GVRP), 108-142 (DEFT…GFGC), 143-173 (LGIV…MQVK), 174-208 (DLVA…AVQF), 209-243 (DSFT…EIDC), 244-274 (NIIV…MKQR), 275-309 (NVVS…GLRP), 310-344 (NYVT…NDKN), and 348-378 (RKEH…MPVE). Positions 383–458 (IWGALLGACA…VAAYSSVEFE (76 aa)) are type E motif. Positions 459–489 (GKIHFFNRGDKSHPQSKAIYEKLDEILKKIR) are type E(+) motif. The type DYW motif stretch occupies residues 490–584 (KMGYVPDTCS…NGVCSCKEFW (95 aa)).

Belongs to the PPR family. PCMP-H subfamily.

The protein localises to the mitochondrion. The sequence is that of Pentatricopeptide repeat-containing protein At2g01510, mitochondrial (PCMP-H37) from Arabidopsis thaliana (Mouse-ear cress).